The primary structure comprises 194 residues: 7-methyl-GTP pyrophosphatase (194 aa).

Asp69 (proton acceptor) is an active-site residue.

This sequence belongs to the Maf family. YceF subfamily. A divalent metal cation serves as cofactor.

It localises to the cytoplasm. The catalysed reaction is N(7)-methyl-GTP + H2O = N(7)-methyl-GMP + diphosphate + H(+). Functionally, nucleoside triphosphate pyrophosphatase that hydrolyzes 7-methyl-GTP (m(7)GTP). May have a dual role in cell division arrest and in preventing the incorporation of modified nucleotides into cellular nucleic acids. The sequence is that of 7-methyl-GTP pyrophosphatase (yceF1) from Salmonella paratyphi A (strain ATCC 9150 / SARB42).